The following is a 186-amino-acid chain: Translation initiation factor IF-3 (186 aa).

The segment at 1–21 is disordered; it reads MINRSSGKDRDRSRSGDKELR.

It belongs to the IF-3 family. In terms of assembly, monomer.

The protein resides in the cytoplasm. Its function is as follows. IF-3 binds to the 30S ribosomal subunit and shifts the equilibrium between 70S ribosomes and their 50S and 30S subunits in favor of the free subunits, thus enhancing the availability of 30S subunits on which protein synthesis initiation begins. This Borrelia turicatae (strain 91E135) protein is Translation initiation factor IF-3.